A 424-amino-acid chain; its full sequence is STAM-binding protein (424 aa).

The segment at 1 to 127 (MSDHGDVSLP…YTEYNEEKKK (127 aa)) is interaction with CHMP3. Phosphoserine is present on residues S2 and S48. The segment at 227–231 (PAKPP) is interaction with STAM. Phosphoserine occurs at positions 243, 245, and 247. The region spanning 257 to 388 (VVVPGRLCPQ…LTDHGLEEIS (132 aa)) is the MPN domain. Zn(2+) is bound by residues H335, H337, D348, H350, C390, H396, and H398. A JAMM motif motif is present at residues 335–348 (HTHPTQTAFLSSVD).

This sequence belongs to the peptidase M67C family. As to quaternary structure, interacts with STAM. Interacts with SMAD6 and SMAD7. Interacts with CHMP3; the interaction appears to relieve the autoinhibition of CHMP3. Interacts with SMURF2 and RNF11; this interaction promotes ubiquitination. Zn(2+) is required as a cofactor. Phosphorylated after BMP type I receptor activation. Post-translationally, ubiquitinated by SMURF2 in the presence of RNF11. Ubiquitously expressed.

Its subcellular location is the nucleus. It localises to the membrane. The protein localises to the cytoplasm. It is found in the early endosome. Its activity is regulated as follows. Inhibited by N-ethylmaleimide. Strongly and specifically inhibited by ubiquitin variants UbV(SP.2) and UbV(SP.3). Also inhibited by UbV(SP.1); an ubiquitin variant that also inhibits STAMBPL1. Zinc metalloprotease that specifically cleaves 'Lys-63'-linked polyubiquitin chains. Does not cleave 'Lys-48'-linked polyubiquitin chains. Plays a role in signal transduction for cell growth and MYC induction mediated by IL-2 and GM-CSF. Potentiates BMP (bone morphogenetic protein) signaling by antagonizing the inhibitory action of SMAD6 and SMAD7. Has a key role in regulation of cell surface receptor-mediated endocytosis and ubiquitin-dependent sorting of receptors to lysosomes. Endosomal localization of STAMBP is required for efficient EGFR degradation but not for its internalization. Involved in the negative regulation of PI3K-AKT-mTOR and RAS-MAP signaling pathways. This is STAM-binding protein (STAMBP) from Homo sapiens (Human).